Here is a 39-residue protein sequence, read N- to C-terminus: Large ribosomal subunit protein bL12 (39 aa).

Belongs to the bacterial ribosomal protein bL12 family. Homodimer. Part of the ribosomal stalk of the 50S ribosomal subunit. Forms a multimeric L10(L12)X complex, where L10 forms an elongated spine to which 2 to 4 L12 dimers bind in a sequential fashion. Binds GTP-bound translation factors.

Its function is as follows. Forms part of the ribosomal stalk which helps the ribosome interact with GTP-bound translation factors. Is thus essential for accurate translation. The chain is Large ribosomal subunit protein bL12 (rplL) from Arthrobacter glacialis.